A 159-amino-acid chain; its full sequence is Small ribosomal subunit protein uS19 (159 aa).

This sequence belongs to the universal ribosomal protein uS19 family.

In terms of biological role, protein S19 forms a complex with S13 that binds strongly to the 16S ribosomal RNA. The polypeptide is Small ribosomal subunit protein uS19 (Pyrobaculum arsenaticum (strain DSM 13514 / JCM 11321 / PZ6)).